Here is a 168-residue protein sequence, read N- to C-terminus: Disulfide bond formation protein B 1 (168 aa).

At 1–14 (MNEQTSRLNRERRF) the chain is on the cytoplasmic side. A helical transmembrane segment spans residues 15–31 (LVLLGLICLSLIGGALY). Over 32-49 (MQVVLGEAPCPLCILQRY) the chain is Periplasmic. Cys-41 and Cys-44 are joined by a disulfide. Residues 50-65 (ALLFIAVFAFIAAAMP) form a helical membrane-spanning segment. Residues 66–72 (GRRSLTF) lie on the Cytoplasmic side of the membrane. A helical transmembrane segment spans residues 73–89 (FEALVVLSAIGGIVAAG). At 90-144 (NHVYILANPMVSCGIDTLQPIVDDLPLAKLWPLAFQVDGFCSTPYPPILGLSLAQ) the chain is on the periplasmic side. Cysteines 102 and 130 form a disulfide. A helical transmembrane segment spans residues 145–163 (WALVAFVLTAVLVPLGIYR). Topologically, residues 164-168 (NRRQA) are cytoplasmic.

Belongs to the DsbB family.

The protein localises to the cell inner membrane. In terms of biological role, required for disulfide bond formation in some periplasmic proteins. Acts by oxidizing the DsbA protein. This chain is Disulfide bond formation protein B 1 (dsbB1), found in Pseudomonas putida (strain ATCC 47054 / DSM 6125 / CFBP 8728 / NCIMB 11950 / KT2440).